The following is a 635-amino-acid chain: PTS system fructose-specific EIIABC component (635 aa).

Positions 5 to 149 (ELLTKHTIKL…DAIIDIINQH (145 aa)) constitute a PTS EIIA type-2 domain. Catalysis depends on His-67, which acts as the Tele-phosphohistidine intermediate; for EIIA activity. A Phosphohistidine; by HPr modification is found at His-67. The segment at 149–168 (HDKDDDEEEEEEEAAPAPAG) is disordered. Positions 152–162 (DDDEEEEEEEA) are enriched in acidic residues. A PTS EIIB type-2 domain is found at 172–267 (ILAVTACPTG…PQELIEKAMN (96 aa)). Cys-178 serves as the catalytic Phosphocysteine intermediate; for EIIB activity. Cys-178 is subject to Phosphocysteine; by EIIA. Residues 273 to 293 (YQGSGGGSAASNDDEEAKGKS) form a disordered region. The 335-residue stretch at 301–635 (FYKHLMSGVS…GIVKKPVTEK (335 aa)) folds into the PTS EIIC type-2 domain. The next 9 membrane-spanning stretches (helical) occupy residues 312-332 (MLPF…WGIH), 350-370 (FIGG…FIAM), 392-412 (NAGF…VILL), 428-448 (PVLI…QFVV), 470-490 (NLVL…GGPL), 511-531 (AAIM…TTIF), 544-564 (ITCY…FAAA), 569-589 (VIPA…FFRV), and 608-628 (MLYL…LGIV).

The protein resides in the cell membrane. The catalysed reaction is D-fructose(out) + N(pros)-phospho-L-histidyl-[protein] = D-fructose 1-phosphate(in) + L-histidyl-[protein]. In terms of biological role, the phosphoenolpyruvate-dependent sugar phosphotransferase system (sugar PTS), a major carbohydrate active transport system, catalyzes the phosphorylation of incoming sugar substrates concomitantly with their translocation across the cell membrane. This system is involved in fructose transport. The protein is PTS system fructose-specific EIIABC component (fruA) of Bacillus subtilis (strain 168).